The chain runs to 413 residues: 26S proteasome regulatory subunit 6B homolog (413 aa).

The disordered stretch occupies residues 1–30 (MATAMVLDPKPAEKLPATRPETSITDVPSD). A coiled-coil region spans residues 32–80 (EDDLYARLKSLQRQLEFIEIQEEYVKDELKNLRREHLRAQEEVKRIQSV). 201-208 (GPPGTGKT) is an ATP binding site.

It belongs to the AAA ATPase family.

It localises to the cytoplasm. Its subcellular location is the nucleus. Its function is as follows. The 26S proteasome is involved in the ATP-dependent degradation of ubiquitinated proteins. The regulatory (or ATPase) complex confers ATP dependency and substrate specificity to the 26S complex. This Solanum tuberosum (Potato) protein is 26S proteasome regulatory subunit 6B homolog.